Consider the following 233-residue polypeptide: MSSKLSKKKLKSLEYRSKKFDKKSQSLEEHEKKVQQKNEELEKKAADKISRDELPEKQLAQSNDKDKHSVSNPPHKTLKSKRQKGKNNDRKVILFVGNLPKDSSVETLQLHFKRAGQVPSVRIPTDKTSGRQKGYAFVEFINPKTDVISKALKFHHTIYKERKINIELTAGGGGKTEARMNKIKEKNRKWKEEMRQRVASEEQQAGEEKMARKAVADEGLESGIHPDRLRLLQ.

Residues 1-10 show a composition bias toward basic residues; the sequence is MSSKLSKKKL. The interval 1-90 is disordered; the sequence is MSSKLSKKKL…KRQKGKNNDR (90 aa). Residues 11–56 show a composition bias toward basic and acidic residues; the sequence is KSLEYRSKKFDKKSQSLEEHEKKVQQKNEELEKKAADKISRDELPE. Residues 76–85 show a composition bias toward basic residues; sequence KTLKSKRQKG. The region spanning 92-171 is the RRM domain; the sequence is VILFVGNLPK…RKINIELTAG (80 aa). 2 stretches are compositionally biased toward basic and acidic residues: residues 194–216 and 224–233; these read MRQRVASEEQQAGEEKMARKAVA and IHPDRLRLLQ. The disordered stretch occupies residues 194 to 233; the sequence is MRQRVASEEQQAGEEKMARKAVADEGLESGIHPDRLRLLQ.

Its subcellular location is the nucleus. The protein resides in the nucleolus. This is an uncharacterized protein from Schizosaccharomyces pombe (strain 972 / ATCC 24843) (Fission yeast).